We begin with the raw amino-acid sequence, 312 residues long: DNA primase small subunit PriS (312 aa).

Residues D88, D90, and D215 contribute to the active site.

Belongs to the eukaryotic-type primase small subunit family. In terms of assembly, heterodimer of a small subunit (PriS) and a large subunit (PriL). Mg(2+) serves as cofactor. The cofactor is Mn(2+).

Its function is as follows. Catalytic subunit of DNA primase, an RNA polymerase that catalyzes the synthesis of short RNA molecules used as primers for DNA polymerase during DNA replication. The small subunit contains the primase catalytic core and has DNA synthesis activity on its own. Binding to the large subunit stabilizes and modulates the activity, increasing the rate of DNA synthesis while decreasing the length of the DNA fragments, and conferring RNA synthesis capability. The DNA polymerase activity may enable DNA primase to also catalyze primer extension after primer synthesis. May also play a role in DNA repair. The polypeptide is DNA primase small subunit PriS (Pyrobaculum calidifontis (strain DSM 21063 / JCM 11548 / VA1)).